A 484-amino-acid chain; its full sequence is MAMLLRVATQRLSPWRSFCSRGSQGGLSQDFVEALKAVVGSPHVSTASAVREQHGHDESMHRCQPPDAVVWPQNVDQVSRVASLCYNQGVPIIPFGTGTGVEGGVCAVQGGVCINLTHMDQITELNTEDFSVVVEPGVTRKALNTHLRDSGLWFPVDPGADASLCGMAATGASGTNAVRYGTMRDNVINLEVVLPDGRLLHTAGRGRHYRKSAAGYNLTGLFVGSEGTLGIITSTTLRLHPAPEATVAATCAFPSVQAAVDSTVQILQAAVPVARIEFLDDVMMDACNRHSKLNCPVAPTLFLEFHGSQQTLAEQLQRTEAITQDNGGSHFSWAKEAEKRNELWAARHNAWYAALALSPGSKAYSTDVCVPISRLPEILVETKEEIKASKLTGAIVGHVGDGNFHCILLVDPDDAEEQRRVKAFAENLGRRALALGGTCTGEHGIGLGKRQLLQEEVGPVGVETMRQLKNTLDPRGLMNPGKVL.

Residues 1–52 (MAMLLRVATQRLSPWRSFCSRGSQGGLSQDFVEALKAVVGSPHVSTASAVRE) constitute a mitochondrion transit peptide. Lys-36 is modified (N6-acetyllysine). Residues 62 to 242 (RCQPPDAVVW…TSTTLRLHPA (181 aa)) form the FAD-binding PCMH-type domain. At Lys-292 the chain carries N6-acetyllysine. Lys-335 is subject to N6-acetyllysine; alternate. At Lys-335 the chain carries N6-succinyllysine; alternate. 2 positions are modified to N6-acetyllysine: Lys-422 and Lys-449.

This sequence belongs to the FAD-binding oxidoreductase/transferase type 4 family. As to quaternary structure, interacts with CSRP3. Requires FAD as cofactor. Readily detected in liver and kidney, with a weaker signal observed in heart, skeletal muscle, stomach, brain, and lung.

The protein localises to the mitochondrion. The enzyme catalyses (R)-lactate + 2 Fe(III)-[cytochrome c] = 2 Fe(II)-[cytochrome c] + pyruvate + 2 H(+). Involved in D-lactate, but not L-lactate catabolic process. This is Probable D-lactate dehydrogenase, mitochondrial from Mus musculus (Mouse).